The sequence spans 445 residues: MEDLALPAAPPAPTLSFTLLAAAAAVAEAMEEALGAALPPLTAPVPAPGDDSACGSPCSVASDCSSVASADFEGFAELGTSLLAGPAVLFDDLTAASVAVAEAAEPRAVGATARSVFAMDCVPLWGLESICGRRPEMEDDYAVVPRFFDLPLWMVAGDAAVDGLDRASFRLPAHFFAVYDGHGGVQVANYCRKRIHAVLTEELRRAEDDACGSDLSGLESKKLWEKAFVDCFSRVDAEVGGNAASGAPPVAPDTVGSTAVVAVVCSSHVIVANCGDSRAVLCRGKQPLPLSLDHKPNREDEYARIEALGGKVIQWNGYRVLGVLAMSRSIGDKYLKPYIIPVPEVTVVARAKDDDCLILASDGLWDVMSNEEVCDAARKRILLWHKKNAATASTSSAQISGDSSDPAAQAAADYLSKLALQKGSKDNITVVVIDLKAHRKFKSKA.

The region spanning 124 to 435 (LWGLESICGR…DNITVVVIDL (312 aa)) is the PPM-type phosphatase domain. Mn(2+) is bound by residues Asp-180, Gly-181, Asp-362, and Asp-426.

It belongs to the PP2C family. As to quaternary structure, interacts with PYL10, SAPK8 and SAPK10. Binding to PYL10 is dependent on the presence of abscisic acid (ABA). Interacts with PYL3, PYL5, PYL9 and PYL10. Binding to PYL9 and PYL10 is dependent on the presence of ABA. Requires Mg(2+) as cofactor. It depends on Mn(2+) as a cofactor. In terms of tissue distribution, expressed in leaf blades, leaf sheaths and lamina joints. Expressed at low levels in roots, stems, flowers and panicles.

It localises to the cytoplasm. The protein localises to the cytosol. It is found in the nucleus. The enzyme catalyses O-phospho-L-seryl-[protein] + H2O = L-seryl-[protein] + phosphate. It catalyses the reaction O-phospho-L-threonyl-[protein] + H2O = L-threonyl-[protein] + phosphate. Repressed by abscisic acid-bound PYL1. Functionally, protein phosphatase that acts as a negative regulator of abscisic acid (ABA) signaling. Involved in the regulation of root architecture development and drought resistance. Can dephosphorylate SAPK8 and SAPK10 in vitro. Together with PYL10, SAPK8 and SAPK10, may form an ABA signaling module involved in stress response. This is Protein phosphatase 2C 53 from Oryza sativa subsp. japonica (Rice).